A 264-amino-acid polypeptide reads, in one-letter code: THAP domain-containing protein 10 (264 aa).

The segment at methionine 1 to histidine 90 adopts a THAP-type zinc-finger fold. Disordered stretches follow at residues histidine 90–glycine 136 and threonine 160–arginine 195. Positions glycine 99–glutamate 122 are enriched in basic and acidic residues. Residues threonine 160–proline 175 show a composition bias toward polar residues.

The protein is THAP domain-containing protein 10 (THAP10) of Pongo abelii (Sumatran orangutan).